Reading from the N-terminus, the 489-residue chain is Mitochondrial-processing peptidase subunit beta (489 aa).

The transit peptide at 1–43 (MAAAAARVVLSSAARRRLWGFSESLLIRGAAGRSLYFGENRLR) directs the protein to the mitochondrion. Zn(2+) is bound at residue histidine 101. Glutamate 104 functions as the Proton acceptor in the catalytic mechanism. Positions 105 and 181 each coordinate Zn(2+).

This sequence belongs to the peptidase M16 family. Heterodimer of PMPCA (alpha) and PMPCB (beta) subunits, forming the mitochondrial processing protease (MPP) in which PMPCA is involved in substrate recognition and binding and PMPCB is the catalytic subunit. Zn(2+) is required as a cofactor.

It is found in the mitochondrion matrix. The enzyme catalyses Release of N-terminal transit peptides from precursor proteins imported into the mitochondrion, typically with Arg in position P2.. Binding to PMPCA is required for catalytic activity. Its function is as follows. Catalytic subunit of the essential mitochondrial processing protease (MPP), which cleaves the mitochondrial sequence off newly imported precursors proteins. Preferentially, cleaves after an arginine at position P2. Required for PINK1 turnover by coupling PINK1 mitochondrial import and cleavage, which results in subsequent PINK1 proteolysis. This chain is Mitochondrial-processing peptidase subunit beta (PMPCB), found in Homo sapiens (Human).